Here is a 570-residue protein sequence, read N- to C-terminus: MRVSKYLLSTQKETPANAEVISHQLMLRAGMIRRNASGLYSYLPSGLRVLRKVEAIVREEMNKAGAIEILMPMVQPADLWVETGRWDKFGPELLRFKDRHNRDFVLGPTHEEVITDLIRKEVSSYKQLPLNLYQIQTKFRDEVRPRFGVMRSREFLMKDAYSFHLDMDTLNETYEAMYQAYSNILSRMGLAFRPVLADTGSIGGSMSHEFHVLAQSGEDLIAYSTGSDYAANIEKAESPMPTETRGAATKELRLVDTPNAKTIAELVEQFGLDITKTVKTLIVKGATEEAPLVALIVRGDHELNEIKADKLDLVASPLEFAPEALIRDAIGAGPGSLGPVGLNMPIIIDHSVSVMSDFAAGANVDDKHYFGINWERDLPLAQAADIRNVVEGEPTPDGLGTYAMARGIEVGHIFQLGTNYSKSMNATVLDENGKSQVLLMGCYGVGVSRIVAAAIEQNFDDRGIVWPEAIAPFSVGILPMNMHKSHRVTDIAEQLYKDLSAAGIDVLLDDRKERPGVMFADMELIGIPHTVVIGDRNIDAGVFEYKNRRTGEKQDVPFDQIVDFLKNLQA.

This sequence belongs to the class-II aminoacyl-tRNA synthetase family. ProS type 1 subfamily. As to quaternary structure, homodimer.

The protein resides in the cytoplasm. The enzyme catalyses tRNA(Pro) + L-proline + ATP = L-prolyl-tRNA(Pro) + AMP + diphosphate. Catalyzes the attachment of proline to tRNA(Pro) in a two-step reaction: proline is first activated by ATP to form Pro-AMP and then transferred to the acceptor end of tRNA(Pro). As ProRS can inadvertently accommodate and process non-cognate amino acids such as alanine and cysteine, to avoid such errors it has two additional distinct editing activities against alanine. One activity is designated as 'pretransfer' editing and involves the tRNA(Pro)-independent hydrolysis of activated Ala-AMP. The other activity is designated 'posttransfer' editing and involves deacylation of mischarged Ala-tRNA(Pro). The misacylated Cys-tRNA(Pro) is not edited by ProRS. This chain is Proline--tRNA ligase, found in Shewanella oneidensis (strain ATCC 700550 / JCM 31522 / CIP 106686 / LMG 19005 / NCIMB 14063 / MR-1).